Here is a 37-residue protein sequence, read N- to C-terminus: Large ribosomal subunit protein bL36 (37 aa).

It belongs to the bacterial ribosomal protein bL36 family.

This is Large ribosomal subunit protein bL36 (rpmJ) from Fusobacterium nucleatum subsp. nucleatum (strain ATCC 25586 / DSM 15643 / BCRC 10681 / CIP 101130 / JCM 8532 / KCTC 2640 / LMG 13131 / VPI 4355).